A 276-amino-acid polypeptide reads, in one-letter code: Diaminopimelate epimerase (276 aa).

Substrate-binding residues include Asn-13, Gln-46, and Asn-66. Catalysis depends on Cys-75, which acts as the Proton donor. Substrate is bound by residues Gly-76–Asn-77, Asn-159, Asn-192, and Glu-210–Arg-211. Cys-219 serves as the catalytic Proton acceptor. Gly-220 to Ser-221 is a binding site for substrate.

The protein belongs to the diaminopimelate epimerase family. As to quaternary structure, homodimer.

The protein resides in the cytoplasm. It catalyses the reaction (2S,6S)-2,6-diaminopimelate = meso-2,6-diaminopimelate. It functions in the pathway amino-acid biosynthesis; L-lysine biosynthesis via DAP pathway; DL-2,6-diaminopimelate from LL-2,6-diaminopimelate: step 1/1. Its function is as follows. Catalyzes the stereoinversion of LL-2,6-diaminopimelate (L,L-DAP) to meso-diaminopimelate (meso-DAP), a precursor of L-lysine and an essential component of the bacterial peptidoglycan. The polypeptide is Diaminopimelate epimerase (Vibrio parahaemolyticus serotype O3:K6 (strain RIMD 2210633)).